Reading from the N-terminus, the 396-residue chain is Elongation factor Tu (396 aa).

The tr-type G domain occupies 10–206 (KPHVNVGTIG…ALDTYIPTPE (197 aa)). Residues 19–26 (GHVDHGKT) form a G1 region. 19–26 (GHVDHGKT) is a GTP binding site. Position 26 (T26) interacts with Mg(2+). Residues 60–64 (GITIN) are G2. The G3 stretch occupies residues 81–84 (DCPG). GTP-binding positions include 81–85 (DCPGH) and 136–139 (NKAD). Residues 136–139 (NKAD) are G4. The G5 stretch occupies residues 174 to 176 (SAK).

This sequence belongs to the TRAFAC class translation factor GTPase superfamily. Classic translation factor GTPase family. EF-Tu/EF-1A subfamily. In terms of assembly, monomer.

It localises to the cytoplasm. The catalysed reaction is GTP + H2O = GDP + phosphate + H(+). GTP hydrolase that promotes the GTP-dependent binding of aminoacyl-tRNA to the A-site of ribosomes during protein biosynthesis. The sequence is that of Elongation factor Tu from Bordetella avium (strain 197N).